Here is a 389-residue protein sequence, read N- to C-terminus: Flagellar P-ring protein (389 aa).

The signal sequence occupies residues 1–33 (MRPLVAARRRAAACCALAACMLALAFAPAAARA).

Belongs to the FlgI family. The basal body constitutes a major portion of the flagellar organelle and consists of four rings (L,P,S, and M) mounted on a central rod.

Its subcellular location is the periplasm. The protein resides in the bacterial flagellum basal body. Functionally, assembles around the rod to form the L-ring and probably protects the motor/basal body from shearing forces during rotation. The chain is Flagellar P-ring protein from Burkholderia mallei (strain ATCC 23344).